A 354-amino-acid polypeptide reads, in one-letter code: Rhodopsin (354 aa).

Residues 1 to 36 are Extracellular-facing; sequence MNGTEGPNFYVPMSNKTGIVRSPFEYPQYYLAEPWK. Residues Asn2 and Asn15 are each glycosylated (N-linked (GlcNAc...) asparagine). A helical transmembrane segment spans residues 37-61; that stretch reads YSVLAAYMFLLILLGLPINFMTLYV. Residues 62–73 lie on the Cytoplasmic side of the membrane; sequence TIQHKKLRTPLN. The chain crosses the membrane as a helical span at residues 74 to 96; sequence YILLNLAFANHFMVLCGFTITMY. Residues 97-110 lie on the Extracellular side of the membrane; sequence TSLHGYFVFGQTGC. A disulfide bridge links Cys110 with Cys187. The chain crosses the membrane as a helical span at residues 111-133; the sequence is YFEGFFATLGGEIALWSLVVLAI. Residues 134 to 136 carry the 'Ionic lock' involved in activated form stabilization motif; it reads ERY. Topologically, residues 134–152 are cytoplasmic; sequence ERYIVVCKPMSNFRFGENH. Residues 153–173 form a helical membrane-spanning segment; sequence AMMGVAFTWIMALACAVPPLF. Residues 174–202 are Extracellular-facing; sequence GWSRYIPEGMQCSCGVDYYTLKPEVNNES. The helical transmembrane segment at 203 to 224 threads the bilayer; the sequence is FVIYMFVVHFLIPLIIISFCYG. At 225–252 the chain is on the cytoplasmic side; that stretch reads RLVCTVKEAAAQQQESATTQKAEKEVTR. Residues 253–274 form a helical membrane-spanning segment; it reads MVVIMVIFFLICWVPYAYVAFY. The Extracellular segment spans residues 275–286; that stretch reads IFTHQGSEFGPI. A helical transmembrane segment spans residues 287–308; it reads FMTVPAFFAKSSAIYNPVIYIM. Lys296 bears the N6-(retinylidene)lysine mark. Over 309–354 the chain is Cytoplasmic; that stretch reads LNKQFRNCMITTLCCGKNPFGDEDASSAATSKTEATSVSTSQVSPA. S-palmitoyl cysteine attachment occurs at residues Cys322 and Cys323. The segment at 331 to 354 is disordered; that stretch reads EDASSAATSKTEATSVSTSQVSPA. Over residues 334-354 the composition is skewed to low complexity; the sequence is SSAATSKTEATSVSTSQVSPA.

Belongs to the G-protein coupled receptor 1 family. Opsin subfamily. In terms of processing, contains one covalently linked retinal chromophore. Upon light absorption, the covalently bound 11-cis-retinal is converted to all-trans-retinal. After hydrolysis of the Schiff base and release of the covalently bound all-trans-retinal, active rhodopsin is regenerated by binding of a fresh molecule of 11-cis-retinal. Retina. Localized in the ventral part of the retina.

The protein resides in the membrane. The protein localises to the cell projection. It localises to the cilium. Its subcellular location is the photoreceptor outer segment. Photoreceptor required for image-forming vision at low light intensity. Required for photoreceptor cell viability after birth. May use a mixture of retinal and 3-dehydroretinal as visual pigment. Light-induced isomerization of 11-cis to all-trans retinal triggers a conformational change that activates signaling via G-proteins. Subsequent receptor phosphorylation mediates displacement of the bound G-protein alpha subunit by arrestin and terminates signaling. The sequence is that of Rhodopsin (RHO) from Aquarana catesbeiana (American bullfrog).